A 279-amino-acid chain; its full sequence is MMDLSTRPKEKLELNKLQKRLRRLTGQAIADFNMIEDGDKVMVCLSGGKDSYTMLEILRNLQASAPINFSIVAVNLDQKQPGFPEHILPAYLEELGVDFHILERDTYSIVKEIVPEGKTTCGLCSRLRRGSLYGFAEEIGATKIALGHHRDDILETLFLNMFFGGKLKSMPPKLLSDDGKHIVIRPLAYCKEEDIEAFSVMKEYPIIPCNLCGSQENLQRQVVKDMLQKWEKEFPGRTESMFSAIQNVVPSHLADTKLFDFKGLKQSPAAFDRLNIISL.

Positions 46-51 match the PP-loop motif motif; sequence SGGKDS. [4Fe-4S] cluster is bound by residues cysteine 121, cysteine 124, and cysteine 212.

This sequence belongs to the TtcA family. In terms of assembly, homodimer. Requires Mg(2+) as cofactor. It depends on [4Fe-4S] cluster as a cofactor.

The protein resides in the cytoplasm. It catalyses the reaction cytidine(32) in tRNA + S-sulfanyl-L-cysteinyl-[cysteine desulfurase] + AH2 + ATP = 2-thiocytidine(32) in tRNA + L-cysteinyl-[cysteine desulfurase] + A + AMP + diphosphate + H(+). Its pathway is tRNA modification. Catalyzes the ATP-dependent 2-thiolation of cytidine in position 32 of tRNA, to form 2-thiocytidine (s(2)C32). The sulfur atoms are provided by the cysteine/cysteine desulfurase (IscS) system. In Marinomonas sp. (strain MWYL1), this protein is tRNA-cytidine(32) 2-sulfurtransferase.